Here is a 116-residue protein sequence, read N- to C-terminus: Proline-rich protein 9 (116 aa).

The polypeptide is Proline-rich protein 9 (PRR9) (Bos taurus (Bovine)).